The chain runs to 492 residues: GTPase Der (492 aa).

EngA-type G domains follow at residues 3 to 167 (PVVA…PAPE) and 188 to 363 (ICIA…AQYA). Residues 9–16 (GRPNVGKS), 56–60 (DTGGF), 119–122 (NKVE), 194–201 (GRPNVGKS), 241–245 (DTAGI), and 306–309 (NKWD) each bind GTP. In terms of domain architecture, KH-like spans 364-448 (YRINTGLLNR…PIRLLFRAKT (85 aa)). Positions 464 to 492 (VEKKEKKTTRRKKERKEQSRRKRVRDLKG) are disordered. Residues 469–492 (KKTTRRKKERKEQSRRKRVRDLKG) show a composition bias toward basic residues.

This sequence belongs to the TRAFAC class TrmE-Era-EngA-EngB-Septin-like GTPase superfamily. EngA (Der) GTPase family. Associates with the 50S ribosomal subunit.

In terms of biological role, GTPase that plays an essential role in the late steps of ribosome biogenesis. The protein is GTPase Der of Desulforapulum autotrophicum (strain ATCC 43914 / DSM 3382 / VKM B-1955 / HRM2) (Desulfobacterium autotrophicum).